A 902-amino-acid chain; its full sequence is Mitochondrial aspartate-glutamate transporter AGC1 (902 aa).

3 Solcar repeats span residues 528–614 (FDSL…MRNR), 622–710 (LSLF…LKKD), and 725–813 (LKTW…FKGF). The next 6 membrane-spanning stretches (helical) occupy residues 534–554 (FSLG…IDFI), 591–611 (GPQL…NDFM), 622–642 (LSLF…VIFT), 681–702 (GLYN…IYFP), 731–751 (LTAG…FDVI), and 786–806 (FKGG…TLAA).

The protein belongs to the mitochondrial carrier (TC 2.A.29) family.

The protein localises to the mitochondrion inner membrane. In terms of biological role, calcium-dependent mitochondrial aspartate and glutamate carrier. Transport of glutamate in mitochondria is required for mitochondrial transamination reactions and ornithine synthesis. Plays also a role in malate-aspartate NADH shuttle, which is critical for growth on acetate and fatty acids. The chain is Mitochondrial aspartate-glutamate transporter AGC1 (AGC1) from Saccharomyces cerevisiae (strain ATCC 204508 / S288c) (Baker's yeast).